Reading from the N-terminus, the 280-residue chain is Fasciclin-like arabinogalactan protein 3 (280 aa).

The signal sequence occupies residues 1 to 24 (MGLKVSSSLLCLTILLAVSSIVSA). The FAS1 domain maps to 25–169 (VNITRVLEKY…LSVVQISMPI (145 aa)). Asn26, Asn126, and Asn159 each carry an N-linked (GlcNAc...) asparagine glycan. Pro residues predominate over residues 180–193 (VPPPPPMSSPPAPS). The segment at 180–262 (VPPPPPMSSP…EPPSSASNTG (83 aa)) is disordered. The segment covering 219-234 (APETAPASAPSESDSP) has biased composition (low complexity). Ser256 carries the GPI-anchor amidated serine lipid modification. Positions 257 to 280 (SASNTGLSFGAVLVLGFVASFVGF) are cleaved as a propeptide — removed in mature form.

The protein belongs to the fasciclin-like AGP family.

Its subcellular location is the cell membrane. May be a cell surface adhesion protein. This Arabidopsis thaliana (Mouse-ear cress) protein is Fasciclin-like arabinogalactan protein 3 (FLA3).